Consider the following 681-residue polypeptide: Proline dehydrogenase 1, mitochondrial (681 aa).

Residues 1–30 (MALLRSLSAQRTAISLVYGRNSSKSSNSVA) constitute a mitochondrion transit peptide. Positions 76–87 (STLVQPEVVSSE) are enriched in polar residues. Disordered regions lie at residues 76–113 (STLV…QRDP) and 216–239 (EEAE…EGSM). Residues 88 to 99 (TVKRSMKQESSQ) show a composition bias toward basic and acidic residues.

The protein belongs to the proline oxidase family. FAD is required as a cofactor. Most abundant in developing nervous system.

It localises to the mitochondrion matrix. It carries out the reaction L-proline + a quinone = (S)-1-pyrroline-5-carboxylate + a quinol + H(+). It functions in the pathway amino-acid degradation; L-proline degradation into L-glutamate; L-glutamate from L-proline: step 1/2. In terms of biological role, converts proline to delta-1-pyrroline-5-carboxylate. Involved in the conversion of proline to glutamate, which functions as a transmitter at neuromuscular junctions. Glutamate deficiency could possibly account for reduced motor activity. In Drosophila melanogaster (Fruit fly), this protein is Proline dehydrogenase 1, mitochondrial (slgA).